Consider the following 166-residue polypeptide: Biotin carboxyl carrier protein of acetyl-CoA carboxylase (166 aa).

The segment covering 61 to 70 has biased composition (polar residues); it reads STASEASSPA. The interval 61–82 is disordered; sequence STASEASSPASVKDVPVEEQPQ. A Biotinyl-binding domain is found at 90–166; it reads GDIVESPLVG…EFGQGLVRIK (77 aa). At Lys132 the chain carries N6-biotinyllysine.

In terms of assembly, homodimer.

The protein operates within lipid metabolism; fatty acid biosynthesis. Functionally, this protein is a component of the acetyl coenzyme A carboxylase complex; first, biotin carboxylase catalyzes the carboxylation of the carrier protein and then the transcarboxylase transfers the carboxyl group to form malonyl-CoA. The sequence is that of Biotin carboxyl carrier protein of acetyl-CoA carboxylase from Streptococcus pyogenes serotype M6 (strain ATCC BAA-946 / MGAS10394).